Consider the following 428-residue polypeptide: Serine--tRNA ligase (428 aa).

231–233 (TAE) provides a ligand contact to L-serine. 262–264 (RSE) serves as a coordination point for ATP. L-serine is bound at residue Glu285. An ATP-binding site is contributed by 349–352 (EISS). Ser385 lines the L-serine pocket.

This sequence belongs to the class-II aminoacyl-tRNA synthetase family. Type-1 seryl-tRNA synthetase subfamily. As to quaternary structure, homodimer. The tRNA molecule binds across the dimer.

It localises to the cytoplasm. It catalyses the reaction tRNA(Ser) + L-serine + ATP = L-seryl-tRNA(Ser) + AMP + diphosphate + H(+). The catalysed reaction is tRNA(Sec) + L-serine + ATP = L-seryl-tRNA(Sec) + AMP + diphosphate + H(+). It functions in the pathway aminoacyl-tRNA biosynthesis; selenocysteinyl-tRNA(Sec) biosynthesis; L-seryl-tRNA(Sec) from L-serine and tRNA(Sec): step 1/1. Its function is as follows. Catalyzes the attachment of serine to tRNA(Ser). Is also able to aminoacylate tRNA(Sec) with serine, to form the misacylated tRNA L-seryl-tRNA(Sec), which will be further converted into selenocysteinyl-tRNA(Sec). This Staphylococcus epidermidis (strain ATCC 35984 / DSM 28319 / BCRC 17069 / CCUG 31568 / BM 3577 / RP62A) protein is Serine--tRNA ligase.